Consider the following 137-residue polypeptide: Large ribosomal subunit protein uL16c (137 aa).

It belongs to the universal ribosomal protein uL16 family. Part of the 50S ribosomal subunit.

The protein resides in the plastid. It localises to the chloroplast. The sequence is that of Large ribosomal subunit protein uL16c from Trieres chinensis (Marine centric diatom).